The following is a 403-amino-acid chain: MSGLGWMKENWRLLVITAVWIVAATSLAVKGVNLGLELKGGTMVIAKTDHPVSKKEMDQTVTVLESRLSTFGFKGIKIQPVGRDHIIVMLPGTPPKEAVELITKPGRFEAKYKGKTVITGQDIESVESPRIERVEGGYQWSVPFRLTAEGARKFAEVAKNAPGQPIDMYLDNKKVSSPRISEDLAMAAASGHMEREIEIVGGAKTKEQAEREAKEIMAVLRSGQLPAKLVPEGVYSVSATLGQNFLKMAMIAGAIAFAAVSVIIALRYRDIRISGPILFTGSSEVVFLIGLASLTGFTIDLPALAGIILSIGSGVDDLIVITDEIVRGERRKEEVTLRQRIKRAFSVVLASFATLAAAMAVLFVAGMGLLKGFAIMTIAGAFYGVVITRPVYADLLKKILGTE.

6 helical membrane passes run 13–33 (LLVI…KGVN), 245–265 (FLKM…VIIA), 285–305 (VVFL…PALA), 306–326 (GIIL…DEIV), 347–367 (VVLA…VAGM), and 368–388 (GLLK…VVIT).

Belongs to the SecD/SecF family. SecD subfamily. In terms of assembly, part of the protein translocation apparatus. Forms a complex with SecF.

Its subcellular location is the cell membrane. Involved in protein export. The protein is Protein-export membrane protein SecD of Methanopyrus kandleri (strain AV19 / DSM 6324 / JCM 9639 / NBRC 100938).